A 161-amino-acid chain; its full sequence is Cytochrome c-type biogenesis protein CcmE (161 aa).

At 1–8 (MNPRRKKR) the chain is on the cytoplasmic side. Residues 9–29 (LTLAVALVFGLGATIGLMLYA) traverse the membrane as a helical; Signal-anchor for type II membrane protein segment. Residues 30 to 161 (LSQNMDLFYT…SDEQKQGRVQ (132 aa)) are Periplasmic-facing. Heme is bound by residues His-129 and Tyr-133.

The protein belongs to the CcmE/CycJ family.

The protein localises to the cell inner membrane. In terms of biological role, heme chaperone required for the biogenesis of c-type cytochromes. Transiently binds heme delivered by CcmC and transfers the heme to apo-cytochromes in a process facilitated by CcmF and CcmH. This chain is Cytochrome c-type biogenesis protein CcmE, found in Photobacterium profundum (strain SS9).